The primary structure comprises 614 residues: MPQYRSRTTTQGRNMAGARALWRATGMKDEDFQKPIIAVVNSFTQFVPGHVHLKDMGQLVAREIEKAGGVAKEFNTIAVDDGIAMGHDGMLYSLPSRDIIADSVEYMVNAHCADAMVCISNCDKITPGMLMAAMRLNIPVVFVSGGPMEAGKTKLAEHGLDLVDAMVIAADSSASDEYVAEIERSACPTCGSCSGMFTANSMNCLTEALGLSLPGNGTVVATHSDRRALFERAGHLIVDLCKDYYERENANVLPRSIGNKAAFENAITLDIAMGGSTNTILHLLAIAQEAELDFTMEDIDRISRYVPQLCKVAPNTQKYHIEDVHRAGGIMSILGELARGNLLNVDCPTVHSPTMADAIAQWDITQTGSAEVAEFYKAGPAGIPTQTAFSQSTRWQSLDGDRADGCIRSVEHAYSKEGGLAVLTGNIAEQGCVVKTAGVDESILVFEGTAYVTESQDQAVADILADKVTAGSVVIVRYEGPKGGPGMQEMLYPTSYIKSKGLGKSCALLTDGRFSGGTSGLSIGHVSPEAAAGGAIGLVKTGDKILIDIPNRSINVLLEDGELEKRRAEQDAKGWKPELPRPRKVSSALKAYALLATSADKGAVRDLKKLESLQ.

Aspartate 81 lines the Mg(2+) pocket. Residue cysteine 122 participates in [2Fe-2S] cluster binding. Mg(2+) is bound by residues aspartate 123 and lysine 124. Lysine 124 carries the N6-carboxylysine modification. Residue cysteine 193 participates in [2Fe-2S] cluster binding. Residue glutamate 489 participates in Mg(2+) binding. Serine 515 (proton acceptor) is an active-site residue.

The protein belongs to the IlvD/Edd family. As to quaternary structure, homodimer. Requires [2Fe-2S] cluster as cofactor. Mg(2+) is required as a cofactor.

The catalysed reaction is (2R)-2,3-dihydroxy-3-methylbutanoate = 3-methyl-2-oxobutanoate + H2O. The enzyme catalyses (2R,3R)-2,3-dihydroxy-3-methylpentanoate = (S)-3-methyl-2-oxopentanoate + H2O. It functions in the pathway amino-acid biosynthesis; L-isoleucine biosynthesis; L-isoleucine from 2-oxobutanoate: step 3/4. It participates in amino-acid biosynthesis; L-valine biosynthesis; L-valine from pyruvate: step 3/4. Its function is as follows. Functions in the biosynthesis of branched-chain amino acids. Catalyzes the dehydration of (2R,3R)-2,3-dihydroxy-3-methylpentanoate (2,3-dihydroxy-3-methylvalerate) into 2-oxo-3-methylpentanoate (2-oxo-3-methylvalerate) and of (2R)-2,3-dihydroxy-3-methylbutanoate (2,3-dihydroxyisovalerate) into 2-oxo-3-methylbutanoate (2-oxoisovalerate), the penultimate precursor to L-isoleucine and L-valine, respectively. The sequence is that of Dihydroxy-acid dehydratase from Saccharophagus degradans (strain 2-40 / ATCC 43961 / DSM 17024).